The primary structure comprises 23 residues: Large ribosomal subunit protein uL10 (23 aa).

This sequence belongs to the universal ribosomal protein uL10 family. Part of the ribosomal stalk of the 50S ribosomal subunit. The N-terminus interacts with L11 and the large rRNA to form the base of the stalk. The C-terminus forms an elongated spine to which L12 dimers bind in a sequential fashion forming a multimeric L10(L12)X complex.

Forms part of the ribosomal stalk, playing a central role in the interaction of the ribosome with GTP-bound translation factors. The chain is Large ribosomal subunit protein uL10 (rplJ) from Klebsiella pneumoniae.